A 78-amino-acid chain; its full sequence is UPF0349 protein BLi03401/BL03152 (78 aa).

It belongs to the UPF0349 family.

This chain is UPF0349 protein BLi03401/BL03152, found in Bacillus licheniformis (strain ATCC 14580 / DSM 13 / JCM 2505 / CCUG 7422 / NBRC 12200 / NCIMB 9375 / NCTC 10341 / NRRL NRS-1264 / Gibson 46).